Here is a 341-residue protein sequence, read N- to C-terminus: MFAAQYIGNKSFNVVEGHAIAPQAGEVRLDVGYVGICGTDMHIYHGVMDQRVSIPQTIGHEISGVVAQIGEGVEGFTVGEKVVVRPLDWCGECPTCEAGLTHICQNLKFMGIDTPGAFQSSWTVKARTLHKLPAGVDLKQGALVEPLSVACHDVRRSRLKAGEKAVILGGGPIGQLVAAVAKSVGAEVLVSEPNDSRREFADELGVKSVNPMDTDLAAYVDQWTGTKGADVVFEVSGVLPAIQSMTQIAGRRGRIVMVAIHSTAPPIDLFQFFWKELELLGARVYEAADFDWAIELIASGQIDLKPFISSVSPLADIGSAFANMDGNPQGMKALVECNAEQ.

Zn(2+) is bound at residue C37. Active-site charge relay system residues include T39 and H42. 6 residues coordinate Zn(2+): H60, E61, C90, C93, C96, and C104.

This sequence belongs to the zinc-containing alcohol dehydrogenase family. Zn(2+) is required as a cofactor.

The catalysed reaction is 2-dehydro-3-deoxy-L-galactonate + NAD(+) = 3-deoxy-D-glycero-2,5-hexodiulosonate + NADH + H(+). Its function is as follows. Involved in the degradation of 3,6-anhydro-L-galactose, which is the major monomeric sugar of red macroalgae. Catalyzes the third step of the pathway, the NAD(+)-dependent oxidation of 2-dehydro-3-deoxy-L-galactonate (L-KDGal) to 3-deoxy-D-glycero-2,5-hexodiulosonate (L-DDGal). In Pseudoalteromonas atlantica (strain T6c / ATCC BAA-1087), this protein is 2-dehydro-3-deoxy-L-galactonate 5-dehydrogenase.